The primary structure comprises 613 residues: tRNA 5-methylaminomethyl-2-thiouridine biosynthesis bifunctional protein MnmC (613 aa).

A tRNA (mnm(5)s(2)U34)-methyltransferase region spans residues Met1 to Glu225. The interval Ile252–Leu613 is FAD-dependent cmnm(5)s(2)U34 oxidoreductase.

In the N-terminal section; belongs to the methyltransferase superfamily. tRNA (mnm(5)s(2)U34)-methyltransferase family. It in the C-terminal section; belongs to the DAO family. It depends on FAD as a cofactor.

It localises to the cytoplasm. The enzyme catalyses 5-aminomethyl-2-thiouridine(34) in tRNA + S-adenosyl-L-methionine = 5-methylaminomethyl-2-thiouridine(34) in tRNA + S-adenosyl-L-homocysteine + H(+). In terms of biological role, catalyzes the last two steps in the biosynthesis of 5-methylaminomethyl-2-thiouridine (mnm(5)s(2)U) at the wobble position (U34) in tRNA. Catalyzes the FAD-dependent demodification of cmnm(5)s(2)U34 to nm(5)s(2)U34, followed by the transfer of a methyl group from S-adenosyl-L-methionine to nm(5)s(2)U34, to form mnm(5)s(2)U34. This is tRNA 5-methylaminomethyl-2-thiouridine biosynthesis bifunctional protein MnmC from Campylobacter jejuni subsp. jejuni serotype O:6 (strain 81116 / NCTC 11828).